The primary structure comprises 127 residues: Fatty acid-binding protein, liver-type (127 aa).

Belongs to the calycin superfamily. Fatty-acid binding protein (FABP) family.

It is found in the cytoplasm. The polypeptide is Fatty acid-binding protein, liver-type (fabp1) (Epinephelus coioides (Orange-spotted grouper)).